Reading from the N-terminus, the 450-residue chain is Na(+)/H(+) antiporter NhaA 1 (450 aa).

A run of 11 helical transmembrane segments spans residues 35-55 (SSLF…SDYA), 79-99 (LKHI…GLEI), 117-137 (LIIC…GFNW), 143-163 (IGWG…LTMV), 173-193 (AFIV…IAIF), 198-218 (ISLM…VANY), 224-244 (PLFY…SGVH), 320-340 (LPVV…VVIN), 356-376 (IISG…WFAL), 392-412 (VIGA…IATL), and 423-443 (VAKT…LLYL).

The protein belongs to the NhaA Na(+)/H(+) (TC 2.A.33) antiporter family.

It localises to the cell inner membrane. The catalysed reaction is Na(+)(in) + 2 H(+)(out) = Na(+)(out) + 2 H(+)(in). Functionally, na(+)/H(+) antiporter that extrudes sodium in exchange for external protons. The chain is Na(+)/H(+) antiporter NhaA 1 from Shewanella denitrificans (strain OS217 / ATCC BAA-1090 / DSM 15013).